We begin with the raw amino-acid sequence, 384 residues long: Sphingosine 1-phosphate receptor 3 (384 aa).

The Extracellular portion of the chain corresponds to methionine 1 to threonine 34. Asparagine 12 carries an N-linked (GlcNAc...) asparagine glycan. A helical transmembrane segment spans residues isoleucine 35–isoleucine 55. The Cytoplasmic portion of the chain corresponds to tryptophan 56–arginine 64. The chain crosses the membrane as a helical span at residues methionine 65–valine 85. Residues asparagine 86–arginine 105 lie on the Extracellular side of the membrane. Residues glutamate 106–glutamate 126 traverse the membrane as a helical segment. Topologically, residues arginine 127–arginine 144 are cytoplasmic. A helical transmembrane segment spans residues valine 145–leucine 165. Residues glycine 166–lysine 186 are Extracellular-facing. A helical transmembrane segment spans residues tyrosine 187–alanine 207. Residues arginine 208–threonine 235 lie on the Cytoplasmic side of the membrane. The helical transmembrane segment at valine 236–leucine 256 threads the bilayer. The Extracellular segment spans residues aspartate 257–aspartate 271. The helical transmembrane segment at tryptophan 272–serine 292 threads the bilayer. The Cytoplasmic portion of the chain corresponds to arginine 293 to arginine 384. 2 stretches are compositionally biased toward polar residues: residues asparagine 315 to proline 325 and glutamine 336 to arginine 347. The interval asparagine 315–arginine 384 is disordered. A compositionally biased stretch (basic and acidic residues) spans alanine 349–histidine 359.

It belongs to the G-protein coupled receptor 1 family.

It localises to the cell membrane. Functionally, receptor for the lysosphingolipid sphingosine 1-phosphate (S1P). The polypeptide is Sphingosine 1-phosphate receptor 3 (s1pr3) (Takifugu rubripes (Japanese pufferfish)).